A 229-amino-acid chain; its full sequence is Demethylmenaquinone methyltransferase (229 aa).

Residues Thr-58, Asp-78, and Asp-100–Ala-101 contribute to the S-adenosyl-L-methionine site.

The protein belongs to the class I-like SAM-binding methyltransferase superfamily. MenG/UbiE family.

The catalysed reaction is a 2-demethylmenaquinol + S-adenosyl-L-methionine = a menaquinol + S-adenosyl-L-homocysteine + H(+). Its pathway is quinol/quinone metabolism; menaquinone biosynthesis; menaquinol from 1,4-dihydroxy-2-naphthoate: step 2/2. Methyltransferase required for the conversion of demethylmenaquinol (DMKH2) to menaquinol (MKH2). In Thermotoga maritima (strain ATCC 43589 / DSM 3109 / JCM 10099 / NBRC 100826 / MSB8), this protein is Demethylmenaquinone methyltransferase.